The sequence spans 76 residues: UPF0291 protein GK1331 (76 aa).

Positions 57–76 (PSGNDVTPKKLKESQRRRFH) are disordered. The span at 63–76 (TPKKLKESQRRRFH) shows a compositional bias: basic and acidic residues.

The protein belongs to the UPF0291 family.

Its subcellular location is the cytoplasm. In Geobacillus kaustophilus (strain HTA426), this protein is UPF0291 protein GK1331.